The following is a 579-amino-acid chain: Peptidyl-prolyl cis-trans isomerase-like 2 (579 aa).

The U-box domain maps to 42-115 (RRLPFNFCSL…GEYVDPVTYK (74 aa)). The disordered stretch occupies residues 227–261 (AERAQRAESGAASKGLTKPGMSATAASQKTVSHQA). A compositionally biased stretch (polar residues) spans 250–259 (TAASQKTVSH). Residues 311–470 (QKGYARISTT…PDIRIKDVTI (160 aa)) form the PPIase cyclophilin-type domain. A disordered region spans residues 555 to 579 (EGPEPEPAKKKFKGGGGFGDFSSWD).

This sequence belongs to the cyclophilin-type PPIase family. PPIL2 subfamily.

Its subcellular location is the nucleus. The enzyme catalyses [protein]-peptidylproline (omega=180) = [protein]-peptidylproline (omega=0). The catalysed reaction is S-ubiquitinyl-[E2 ubiquitin-conjugating enzyme]-L-cysteine + [acceptor protein]-L-lysine = [E2 ubiquitin-conjugating enzyme]-L-cysteine + N(6)-ubiquitinyl-[acceptor protein]-L-lysine.. Its pathway is protein modification; protein ubiquitination. In terms of biological role, may catalyze the cis-trans isomerization of proline imidic peptide bonds in oligopeptides thereby assisting the folding of proteins. May also function as a chaperone, playing a role in intracellular transport of proteins. May also have a protein ubiquitin ligase activity acting as an E3 ubiquitin protein ligase or as a ubiquitin-ubiquitin ligase promoting elongation of ubiquitin chains on proteins. The polypeptide is Peptidyl-prolyl cis-trans isomerase-like 2 (cyp8) (Aspergillus fumigatus (strain ATCC MYA-4609 / CBS 101355 / FGSC A1100 / Af293) (Neosartorya fumigata)).